Reading from the N-terminus, the 358-residue chain is Neutral protease 2 homolog PADG_00776 (358 aa).

The first 19 residues, 1–19, serve as a signal peptide directing secretion; sequence MRRVSGILAVAAFTISAFA. Residues 20–185 constitute a propeptide that is removed on maturation; the sequence is GVIQPVAKDA…MNQFVKIAKL (166 aa). 2 disulfides stabilise this stretch: cysteine 188/cysteine 259 and cysteine 266/cysteine 284. Asparagine 249 carries an N-linked (GlcNAc...) asparagine glycan. Histidine 309 serves as a coordination point for Zn(2+). Glutamate 310 is an active-site residue. Positions 313 and 324 each coordinate Zn(2+).

This sequence belongs to the peptidase M35 family. It depends on Zn(2+) as a cofactor.

It localises to the secreted. The enzyme catalyses Preferential cleavage of bonds with hydrophobic residues in P1'. Also 3-Asn-|-Gln-4 and 8-Gly-|-Ser-9 bonds in insulin B chain.. In terms of biological role, secreted metalloproteinase that allows assimilation of proteinaceous substrates. Shows high activities on basic nuclear substrates such as histone and protamine. This is Neutral protease 2 homolog PADG_00776 from Paracoccidioides brasiliensis (strain Pb18).